Consider the following 588-residue polypeptide: ATP-dependent lipid A-core flippase (588 aa).

A run of 6 helical transmembrane segments spans residues 23–43, 56–76, 141–161, 162–182, 257–277, and 278–298; these read FWPVLLLGVLANILYSGIDAG, FITIDLDFVKQIPLIVLIGIT, DALTDFIQNICLVIGLLTVMM, VICWQLSLMFLLTIPFVGIIV, LVIAIGIAMIIMAAIHLSTVI, and TISAGSFLAIIAAMLQLIKPM. One can recognise an ABC transmembrane type-1 domain in the interval 28–310; that stretch reads LLGVLANILY…LTTLNATIQR (283 aa). The region spanning 342 to 576 is the ABC transporter domain; the sequence is IEFKHVYHAY…DGHYAQLYKV (235 aa). Residue 375-382 participates in ATP binding; it reads GHSGSGKT.

It belongs to the ABC transporter superfamily. Lipid exporter (TC 3.A.1.106) family. Homodimer.

Its subcellular location is the cell inner membrane. It catalyses the reaction ATP + H2O + lipid A-core oligosaccharideSide 1 = ADP + phosphate + lipid A-core oligosaccharideSide 2.. Its function is as follows. Involved in lipopolysaccharide (LPS) biosynthesis. Translocates lipid A-core from the inner to the outer leaflet of the inner membrane. Transmembrane domains (TMD) form a pore in the inner membrane and the ATP-binding domain (NBD) is responsible for energy generation. The protein is ATP-dependent lipid A-core flippase of Legionella pneumophila (strain Paris).